Here is a 339-residue protein sequence, read N- to C-terminus: Heat-inducible transcription repressor HrcA (339 aa).

This sequence belongs to the HrcA family.

Its function is as follows. Negative regulator of class I heat shock genes (grpE-dnaK-dnaJ and groELS operons). Prevents heat-shock induction of these operons. The chain is Heat-inducible transcription repressor HrcA from Clostridium perfringens (strain 13 / Type A).